The following is a 554-amino-acid chain: CTP synthase (554 aa).

The amidoligase domain stretch occupies residues 1-265; it reads MTPLIFVTGG…DELVIEQFKL (265 aa). Ser-13 is a CTP binding site. Ser-13 contacts UTP. Residues 14-19 and Asp-71 contribute to the ATP site; that span reads SLGKGI. Positions 71 and 139 each coordinate Mg(2+). Residues 146–148, 186–191, and Lys-222 each bind CTP; these read DIE and KTKPTQ. UTP is bound by residues 186–191 and Lys-222; that span reads KTKPTQ. Positions 292–545 constitute a Glutamine amidotransferase type-1 domain; sequence NIAVVGKYVD…VRAAREKKAG (254 aa). An L-glutamine-binding site is contributed by Gly-353. The active-site Nucleophile; for glutamine hydrolysis is Cys-380. Residues 381–384, Glu-404, and Arg-471 contribute to the L-glutamine site; that span reads YGMQ. Catalysis depends on residues His-518 and Glu-520.

This sequence belongs to the CTP synthase family. As to quaternary structure, homotetramer.

The catalysed reaction is UTP + L-glutamine + ATP + H2O = CTP + L-glutamate + ADP + phosphate + 2 H(+). The enzyme catalyses L-glutamine + H2O = L-glutamate + NH4(+). It carries out the reaction UTP + NH4(+) + ATP = CTP + ADP + phosphate + 2 H(+). It participates in pyrimidine metabolism; CTP biosynthesis via de novo pathway; CTP from UDP: step 2/2. With respect to regulation, allosterically activated by GTP, when glutamine is the substrate; GTP has no effect on the reaction when ammonia is the substrate. The allosteric effector GTP functions by stabilizing the protein conformation that binds the tetrahedral intermediate(s) formed during glutamine hydrolysis. Inhibited by the product CTP, via allosteric rather than competitive inhibition. Catalyzes the ATP-dependent amination of UTP to CTP with either L-glutamine or ammonia as the source of nitrogen. Regulates intracellular CTP levels through interactions with the four ribonucleotide triphosphates. The polypeptide is CTP synthase (Xanthomonas euvesicatoria pv. vesicatoria (strain 85-10) (Xanthomonas campestris pv. vesicatoria)).